The sequence spans 257 residues: Triosephosphate isomerase (257 aa).

Residues Asn-11 and Lys-13 each contribute to the substrate site. Residue His-96 is the Electrophile of the active site. The active-site Proton acceptor is the Glu-170.

Belongs to the triosephosphate isomerase family. As to quaternary structure, homodimer.

The protein resides in the cytoplasm. It carries out the reaction D-glyceraldehyde 3-phosphate = dihydroxyacetone phosphate. It catalyses the reaction dihydroxyacetone phosphate = methylglyoxal + phosphate. The protein operates within carbohydrate biosynthesis; gluconeogenesis. Its pathway is carbohydrate degradation; glycolysis; D-glyceraldehyde 3-phosphate from glycerone phosphate: step 1/1. Its function is as follows. Triosephosphate isomerase is an extremely efficient metabolic enzyme that catalyzes the interconversion between dihydroxyacetone phosphate (DHAP) and D-glyceraldehyde-3-phosphate (G3P) in glycolysis and gluconeogenesis. In terms of biological role, it is also responsible for the non-negligible production of methylglyoxal a reactive cytotoxic side-product that modifies and can alter proteins, DNA and lipids. The chain is Triosephosphate isomerase from Giardia intestinalis (Giardia lamblia).